The following is a 248-amino-acid chain: Phosphoribosylformylglycinamidine synthase subunit PurQ (248 aa).

Residues 6 to 248 (AMVLRMEGTN…IFFRILYNST (243 aa)) form the Glutamine amidotransferase type-1 domain. Cys95 acts as the Nucleophile in catalysis. Residues His215 and Glu217 contribute to the active site.

In terms of assembly, part of the FGAM synthase complex composed of 1 PurL, 1 PurQ and 2 PurS subunits.

The protein resides in the cytoplasm. It catalyses the reaction N(2)-formyl-N(1)-(5-phospho-beta-D-ribosyl)glycinamide + L-glutamine + ATP + H2O = 2-formamido-N(1)-(5-O-phospho-beta-D-ribosyl)acetamidine + L-glutamate + ADP + phosphate + H(+). It carries out the reaction L-glutamine + H2O = L-glutamate + NH4(+). It participates in purine metabolism; IMP biosynthesis via de novo pathway; 5-amino-1-(5-phospho-D-ribosyl)imidazole from N(2)-formyl-N(1)-(5-phospho-D-ribosyl)glycinamide: step 1/2. Its function is as follows. Part of the phosphoribosylformylglycinamidine synthase complex involved in the purines biosynthetic pathway. Catalyzes the ATP-dependent conversion of formylglycinamide ribonucleotide (FGAR) and glutamine to yield formylglycinamidine ribonucleotide (FGAM) and glutamate. The FGAM synthase complex is composed of three subunits. PurQ produces an ammonia molecule by converting glutamine to glutamate. PurL transfers the ammonia molecule to FGAR to form FGAM in an ATP-dependent manner. PurS interacts with PurQ and PurL and is thought to assist in the transfer of the ammonia molecule from PurQ to PurL. In Picrophilus torridus (strain ATCC 700027 / DSM 9790 / JCM 10055 / NBRC 100828 / KAW 2/3), this protein is Phosphoribosylformylglycinamidine synthase subunit PurQ.